The sequence spans 261 residues: Non-structural protein 2a (261 aa).

It belongs to the coronaviruses ns2a protein family.

It localises to the host cytoplasm. Functionally, not essential for virus replication in transformed murine cells. The protein is Non-structural protein 2a of Mus musculus (Mouse).